A 146-amino-acid chain; its full sequence is Hemoglobin subunit beta-2 (146 aa).

The Globin domain maps to Gly-2–His-146. Heme b contacts are provided by His-63 and His-92.

The protein belongs to the globin family. Heterotetramer of two alpha chains and two beta chains. In terms of tissue distribution, red blood cells.

Involved in oxygen transport from the lung to the various peripheral tissues. This Xenopus borealis (Kenyan clawed frog) protein is Hemoglobin subunit beta-2 (hbb2).